Consider the following 239-residue polypeptide: RNA polymerase sigma factor FliA (239 aa).

The tract at residues 16-88 is sigma-70 factor domain-2; sequence LWQRYVPLVR…MLDELRSRDW (73 aa). The Interaction with polymerase core subunit RpoC signature appears at 43-46; it reads DLLQ. Positions 96–166 are sigma-70 factor domain-3; that stretch reads NAREVAQAMG…IELVTEEHQQ (71 aa). A sigma-70 factor domain-4 region spans residues 185 to 233; that stretch reads AIESLPEREQLVLTLYYQEELNLKEIGAVLEVGESRVSQLHSQAIKRLR. A DNA-binding region (H-T-H motif) is located at residues 207–226; that stretch reads LKEIGAVLEVGESRVSQLHS.

This sequence belongs to the sigma-70 factor family. FliA subfamily.

It localises to the cytoplasm. Its function is as follows. Sigma factors are initiation factors that promote the attachment of RNA polymerase to specific initiation sites and are then released. This sigma factor controls the expression of flagella-related genes. The protein is RNA polymerase sigma factor FliA of Salmonella typhi.